The chain runs to 77 residues: DNA-directed RNA polymerase subunit epsilon (77 aa).

It belongs to the RNA polymerase subunit epsilon family. In terms of assembly, RNAP is composed of a core of 2 alpha, a beta and a beta' subunit. The core is associated with a delta subunit, and at least one of epsilon or omega. When a sigma factor is associated with the core the holoenzyme is formed, which can initiate transcription.

The catalysed reaction is RNA(n) + a ribonucleoside 5'-triphosphate = RNA(n+1) + diphosphate. A non-essential component of RNA polymerase (RNAP). The polypeptide is DNA-directed RNA polymerase subunit epsilon (Streptococcus pneumoniae serotype 19F (strain G54)).